A 520-amino-acid chain; its full sequence is GMP synthase [glutamine-hydrolyzing] (520 aa).

The Glutamine amidotransferase type-1 domain occupies Lys-13–Asp-205. The active-site Nucleophile is Cys-90. Active-site residues include His-179 and Glu-181. One can recognise a GMPS ATP-PPase domain in the interval Trp-206–Arg-395. ATP is bound at residue Ser-233 to Ser-239.

In terms of assembly, homodimer.

It carries out the reaction XMP + L-glutamine + ATP + H2O = GMP + L-glutamate + AMP + diphosphate + 2 H(+). It functions in the pathway purine metabolism; GMP biosynthesis; GMP from XMP (L-Gln route): step 1/1. In terms of biological role, catalyzes the synthesis of GMP from XMP. The chain is GMP synthase [glutamine-hydrolyzing] from Streptococcus pneumoniae (strain ATCC 700669 / Spain 23F-1).